The primary structure comprises 367 residues: Trans-enoyl reductase opdC (367 aa).

Residues 47 to 50, 199 to 202, Tyr217, 264 to 265, and 353 to 354 contribute to the NADP(+) site; these read YDAK, SPHN, LD, and IT.

It belongs to the zinc-containing alcohol dehydrogenase family. As to quaternary structure, monomer.

It participates in secondary metabolite biosynthesis. Functionally, trans-enoyl reductase; part of the gene cluster that mediates the biosynthesis of oxopyrrolidines, polyketide-amino acid hybrid compounds with feature structures of tetramic acid. The polyketide chain is first assembled by the highly reducing PKS module of opdA using acetyl-CoA as the starter unit and five malonyl-CoA as the extender units. OpdC acts as a trans-acting enoyl reductase and reduces the terminal alkenyl to alkane. The 17R in oxopyrrolidine A and 15R, 17S in oxopyrrolidine B are generated by non-stereospecific catalysis of the ketoreductase (KR) domain and enoyl reductases. Then the polyketides with specific configurations are transferred to the NRPS module of opdA and linked to L-tyrosine to form an amide bond. Finally, the oxopyrrolidines are offloaded through a Dieckmann cyclization catalyzed by the terminal D domain to give a tetramic acid moiety. This Penicillium oxalicum (strain 114-2 / CGMCC 5302) (Penicillium decumbens) protein is Trans-enoyl reductase opdC.